A 675-amino-acid polypeptide reads, in one-letter code: Methionine--tRNA ligase (675 aa).

Positions 15–25 (PYANGSIHLGH) match the 'HIGH' region motif. 4 residues coordinate Zn(2+): Cys146, Cys149, Cys159, and Cys162. Residues 332 to 336 (KMSKS) carry the 'KMSKS' region motif. Lys335 contacts ATP. The region spanning 573–675 (DFAKVDMRIA…SGAQPGMQVK (103 aa)) is the tRNA-binding domain.

It belongs to the class-I aminoacyl-tRNA synthetase family. MetG type 1 subfamily. As to quaternary structure, homodimer. It depends on Zn(2+) as a cofactor.

Its subcellular location is the cytoplasm. The enzyme catalyses tRNA(Met) + L-methionine + ATP = L-methionyl-tRNA(Met) + AMP + diphosphate. Functionally, is required not only for elongation of protein synthesis but also for the initiation of all mRNA translation through initiator tRNA(fMet) aminoacylation. In Serratia proteamaculans (strain 568), this protein is Methionine--tRNA ligase.